We begin with the raw amino-acid sequence, 870 residues long: MDIIFCTPTYCKIMLMIIMLISLRTRCDTNNFLNCSVEKEEGEEEIISTNLKRINDDMNILGRILNDERNIKITDIVEMLQNEYDDKKKKKKKKKYIYRKKKSNNKINEINSVQHFNVKENILNEKKKNPLNDNFKNPKLRKHSPNNKKNKNKIGQIKFHIVGYDKKKITKYLTPSMISSIQKRLMNKNKKTNVNVNMSNGRVLPFFPKEYFLHSSTHEKKDKMATKKNNKEESIINERLLENLENISLSRTIKDIRGEEGNERKVKEEDNNIKEEGNSFKKYFKGVVKLYVDITEPNLEMIWQNYPPKSITGSGFIIEGHLIITNAHNISYSTRILIRKHGNSGKYEAKILYVAHDVDIAILTTDDKTFFDDVYALHFGALPSLKDEIITIGYPAGGDKLSVTEGIVSRIDVQYYKHSNYKFLLTQIDAPLNPGNSGGPALVRGKVVGICFQSYKVSNNISYIIPSTIISHFLLDIHKNKDYTGYAFLGVKYEPLENPSLREALGLEEMERKKIIKKNVGILITEVFEGHMSKQDDKYHDMDNKHHNVGDTHHNVGDTHHNVGDDHTDNLQGDTDYCTYILNSNIITSDKKNIYSDKKKKKIYSDNNNNNNNFNYYYNMHGEDEQSCYGLKKNDIILRVDGKDINNDGSVILRDNETVGFQHLFNEKFINDLCIIKIVRNKKIKSVMVKLYKVKYLLNQHNWDKRNKYFIYGGIVFSILTRSLYVYTQNPEINKLMLYNNFKKKSKDEIVVLKNILPTKITTGYYYTDSIVLRVNNIKVKNLKHLIELIEMTKYTNRLMYLKNNKHTLQSYINYYNTKITSLNINTIIHILILTTSGQKVPIVLNKRDVEKYNEEIKKIYSITRDRYVY.

Residues 1–29 (MDIIFCTPTYCKIMLMIIMLISLRTRCDT) form the signal peptide. A disordered region spans residues 128 to 151 (KNPLNDNFKNPKLRKHSPNNKKNK). The span at 138–151 (PKLRKHSPNNKKNK) shows a compositional bias: basic residues. Residues His-328, Asp-359, and Ser-437 each act as charge relay system in the active site.

It belongs to the peptidase S1C family. In terms of assembly, oligomer; may form trimers or hexamers. Forms a complex at least composed of DegP, ENO and HSP70.

It is found in the cytoplasm. The protein resides in the parasitophorous vacuole. The protein localises to the host cell membrane. It localises to the host cytoplasm. Functionally, serine protease which also acts as a protein chaperone. Plays a role in the parasite development in host erythrocytes possibly by protecting it against thermal and oxidative stresses. The protein is Serine protease DegP homolog of Plasmodium falciparum (isolate 3D7).